The sequence spans 235 residues: MAPSFIFVEDRPAPLDATSDPPSLFDGTTRLYTSYVCPFAQRVWITRNFKGLQEKIKLVPLDLGNRPAWYKEKVYPENKVPALEHNGKIIGESLDLIKYLDNTFEGPSLYPEDHAKREFGDELLKYTDTFVKTMYVSLKGDPSKETAPVLDYLENALYKFDDGPFFLGQLSLVDIAYIPFIERFQTVLNELFKCDITAERPKLSAWIEEINKSDGYAQTKMDPKEIVEVFKKKFM.

Positions 27–108 constitute a GST N-terminal domain; it reads GTTRLYTSYV…YLDNTFEGPS (82 aa). Residues 37 to 38, 65 to 66, 79 to 80, and 92 to 93 contribute to the glutathione site; these read CP, NR, KV, and ES. The GST C-terminal domain occupies 86–230; that stretch reads NGKIIGESLD…MDPKEIVEVF (145 aa).

Belongs to the GST superfamily. Lambda family.

The protein resides in the cytoplasm. Its subcellular location is the cytosol. The enzyme catalyses RX + glutathione = an S-substituted glutathione + a halide anion + H(+). Catalyzes the glutathione-dependent reduction of S-glutathionylquercetin to quercetin. The sequence is that of Glutathione S-transferase L3 (GSTL3) from Arabidopsis thaliana (Mouse-ear cress).